A 400-amino-acid polypeptide reads, in one-letter code: Subtilisin-like protease 1 (400 aa).

The first 20 residues, 1–20 (MKFSQSLIALAACFLPLIAA), serve as a signal peptide directing secretion. Residues 21 to 119 (APVEAQHAKI…IEMDGKVQAN (99 aa)) constitute a propeptide that is removed on maturation. Residues 42–117 (SYIVVFNKGV…AWIEMDGKVQ (76 aa)) enclose the Inhibitor I9 domain. The N-linked (GlcNAc...) asparagine glycan is linked to N82. The region spanning 128–400 (TWGLGRISHK…NLIAYNGNGA (273 aa)) is the Peptidase S8 domain. Catalysis depends on charge relay system residues D160, H192, and S345.

It belongs to the peptidase S8 family.

The protein localises to the secreted. In terms of biological role, major secreted subtilisin-like serine endopeptidase. Mediates the degradation of collagen, the major structural protein in the mammalian host. Degrades the nonhelical regions of collagen that function in the cross-linking of the helical components. May function as virulence factor involved in epidermal wing necrosis observed in white nose syndrome (WNS) in bats. This Pseudogymnoascus destructans (strain ATCC MYA-4855 / 20631-21) (Bat white-nose syndrome fungus) protein is Subtilisin-like protease 1.